Consider the following 517-residue polypeptide: Cytochrome P450 monooxygenase stcB (517 aa).

Residue Cys-461 participates in heme binding.

Belongs to the cytochrome P450 family. The cofactor is heme.

It participates in mycotoxin biosynthesis; sterigmatocystin biosynthesis. In terms of biological role, cytochrome P450 monooxygenase; part of the gene cluster that mediates the biosynthesis of sterigmatocystin (ST), a polyketide-derived furanocoumarin which is part of the most toxic and carcinogenic compounds among the known mycotoxins. The first step in the biosynthesis of sterigmatocystin is the production of hexanoate by the fatty acid synthase (FAS) units stcJ and stcK. The polyketide backbone is assembled by the non-reducing polyketide synthase stcA by condensation of the starter hexanoyl-CoA and 7 malonyl-CoA extender units followed by cyclization and release of norsolorinic acid. Norsolorinic acid is the first stable intermediate in the biosynthesis of sterigmatocystin and is converted into averantin (AVN) by the ketoreductase stcE which reduces the hexanoate ketone to an alcohol. Averantin is then oxidized into 5'-hydroxyaverantin (HAVN) by the cytochrome P450 monooxygenase stcF. 5'-hydroxyaverantin is further converted to 5'-oxyaverantin (OAVN) by the 5'-hydroxyaverantin dehydrogenase stcG. The next step is the conversion of OAVN into averufin (AVF) which is catalyzed by a yet to be identified enzyme. The cytochrome P450 monooxygenase stcB and the flavin-binding monooxygenase stcW are both required for the conversion of averufin to 1-hydroxyversicolorone. The esterase stcI probably catalyzes the formation of versiconal hemiacetal acetate from 1-hydroxyversicolorone. The oxydoreductase stcN then probably catalyzes the biosynthetic step from versiconal to versicolorin B (VERB). The next step is performed by the versicolorin B desaturase stcL to produce versicolorin A (VERA). The ketoreductase stcU and the cytochrome P450 monooxygenase stcS are involved in the conversion of versicolorin A to demethylsterigmatocystin. The Baeyer-Villiger oxidas stcQ and the reductase stcR might be involved in the biosynthetic step from versicolorin A to demethylsterigmatocystin. The final step in the biosynthesis of sterigmatocystin is the methylation of demethylsterigmatocystin catalyzed by the methyltransferase stcP. In Emericella nidulans (strain FGSC A4 / ATCC 38163 / CBS 112.46 / NRRL 194 / M139) (Aspergillus nidulans), this protein is Cytochrome P450 monooxygenase stcB.